A 258-amino-acid chain; its full sequence is MGKRATTSVRREELNRGAWTDHEDKILRDYITTHGEGKWSTLPNQAGLKRCGKSCRLRWKNYLRPGIKRGNISSDEEELIIRLHNLLGNRWSLIAGRLPGRTDNEIKNHWNSNLRKRLPKTQTKQPKRIKHSTNNENNVCVIRTKAIRCSKTLLFSDLSLQKKSSTSPLPLKEQEMDQGGSSLMGDLEFDFDRIHSEFHFPDLMDFDGLDCGNVTSLVSSNEILGELVPAQGNLDLNRPFTSCHHRGDDEDWLRDFTC.

HTH myb-type domains follow at residues 11 to 63 (REEL…KNYL) and 64 to 118 (RPGI…RKRL). 2 DNA-binding regions (H-T-H motif) span residues 39 to 63 (WSTL…KNYL) and 91 to 114 (WSLI…NSNL). 47-54 (GLKRCGKS) provides a ligand contact to ATP.

Interacts with BHLH2/EGL3/MYC146, BHLH12/MYC1 and BHLH42/TT8. As to expression, expressed at a high level in immature siliques and at a lower level in flowers. Undetected in young seedlings, roots, leaves and inflorescence stems.

It is found in the nucleus. In terms of biological role, transcription activator, when associated with BHLH2/EGL3/MYC146, BHLH12/MYC1, or BHLH42/TT8. Involved in the control of flavonoid late metabolism in developing siliques. Plays a key role in determining the tissue-specific activation of leucoanthocyanidin reductase (BANYULS). The polypeptide is Transcription factor TT2 (TT2) (Arabidopsis thaliana (Mouse-ear cress)).